A 286-amino-acid chain; its full sequence is uncharacterized protein (286 aa).

7 consecutive transmembrane segments (helical) span residues 30 to 50 (LTFM…LTVQ), 68 to 88 (LSTI…VTAF), 99 to 119 (WFWA…GILL), 136 to 156 (IVYA…LSAL), 169 to 189 (LFHI…LSFI), 205 to 225 (IIPG…VYFV), and 254 to 274 (SALF…YFIL).

The protein localises to the cell membrane. This is an uncharacterized protein from Mycoplasma genitalium (strain ATCC 33530 / DSM 19775 / NCTC 10195 / G37) (Mycoplasmoides genitalium).